Reading from the N-terminus, the 117-residue chain is Small ribosomal subunit protein uS12c (117 aa).

The segment at 9–40 is disordered; that stretch reads RNARQPIENRKKSPALRGCPQRRGTITPKKPN.

The protein belongs to the universal ribosomal protein uS12 family. Part of the 30S ribosomal subunit.

The protein localises to the plastid. It is found in the chloroplast. In terms of biological role, with S4 and S5 plays an important role in translational accuracy. Located at the interface of the 30S and 50S subunits. The polypeptide is Small ribosomal subunit protein uS12c (rps12) (Pinus koraiensis (Korean pine)).